Reading from the N-terminus, the 156-residue chain is 6,7-dimethyl-8-ribityllumazine synthase (156 aa).

5-amino-6-(D-ribitylamino)uracil-binding positions include F23, 57-59 (AYE), and 81-83 (AII). 86–87 (GT) is a (2S)-2-hydroxy-3-oxobutyl phosphate binding site. H89 serves as the catalytic Proton donor. 5-amino-6-(D-ribitylamino)uracil is bound at residue F114. R128 contacts (2S)-2-hydroxy-3-oxobutyl phosphate.

It belongs to the DMRL synthase family.

The catalysed reaction is (2S)-2-hydroxy-3-oxobutyl phosphate + 5-amino-6-(D-ribitylamino)uracil = 6,7-dimethyl-8-(1-D-ribityl)lumazine + phosphate + 2 H2O + H(+). It participates in cofactor biosynthesis; riboflavin biosynthesis; riboflavin from 2-hydroxy-3-oxobutyl phosphate and 5-amino-6-(D-ribitylamino)uracil: step 1/2. Catalyzes the formation of 6,7-dimethyl-8-ribityllumazine by condensation of 5-amino-6-(D-ribitylamino)uracil with 3,4-dihydroxy-2-butanone 4-phosphate. This is the penultimate step in the biosynthesis of riboflavin. In Helicobacter pylori (strain Shi470), this protein is 6,7-dimethyl-8-ribityllumazine synthase.